The sequence spans 82 residues: Small ribosomal subunit protein uS17 (82 aa).

This sequence belongs to the universal ribosomal protein uS17 family. In terms of assembly, part of the 30S ribosomal subunit.

Functionally, one of the primary rRNA binding proteins, it binds specifically to the 5'-end of 16S ribosomal RNA. The sequence is that of Small ribosomal subunit protein uS17 from Paracoccus denitrificans (strain Pd 1222).